The following is a 488-amino-acid chain: Protein nucleotidyltransferase YdiU (488 aa).

G91, G93, R94, K114, D126, G127, R177, and R184 together coordinate ATP. D253 serves as the catalytic Proton acceptor. Residues N254 and D263 each contribute to the Mg(2+) site. An ATP-binding site is contributed by D263.

It belongs to the SELO family. Requires Mg(2+) as cofactor. Mn(2+) serves as cofactor.

It carries out the reaction L-seryl-[protein] + ATP = 3-O-(5'-adenylyl)-L-seryl-[protein] + diphosphate. The enzyme catalyses L-threonyl-[protein] + ATP = 3-O-(5'-adenylyl)-L-threonyl-[protein] + diphosphate. It catalyses the reaction L-tyrosyl-[protein] + ATP = O-(5'-adenylyl)-L-tyrosyl-[protein] + diphosphate. The catalysed reaction is L-histidyl-[protein] + UTP = N(tele)-(5'-uridylyl)-L-histidyl-[protein] + diphosphate. It carries out the reaction L-seryl-[protein] + UTP = O-(5'-uridylyl)-L-seryl-[protein] + diphosphate. The enzyme catalyses L-tyrosyl-[protein] + UTP = O-(5'-uridylyl)-L-tyrosyl-[protein] + diphosphate. Its function is as follows. Nucleotidyltransferase involved in the post-translational modification of proteins. It can catalyze the addition of adenosine monophosphate (AMP) or uridine monophosphate (UMP) to a protein, resulting in modifications known as AMPylation and UMPylation. The sequence is that of Protein nucleotidyltransferase YdiU from Bacillus cereus (strain B4264).